A 458-amino-acid chain; its full sequence is Cysteine--tRNA ligase (458 aa).

Cysteine 29 lines the Zn(2+) pocket. Positions 31 to 41 (MTVYDLCHLGH) match the 'HIGH' region motif. Positions 213, 238, and 242 each coordinate Zn(2+). The 'KMSKS' region motif lies at 270–274 (KMSKS). Residue lysine 273 coordinates ATP.

It belongs to the class-I aminoacyl-tRNA synthetase family. As to quaternary structure, monomer. It depends on Zn(2+) as a cofactor.

Its subcellular location is the cytoplasm. The enzyme catalyses tRNA(Cys) + L-cysteine + ATP = L-cysteinyl-tRNA(Cys) + AMP + diphosphate. The sequence is that of Cysteine--tRNA ligase from Acidovorax sp. (strain JS42).